We begin with the raw amino-acid sequence, 67 residues long: Conotoxin TsMMSK-011 (67 aa).

The N-terminal stretch at 1 to 20 is a signal peptide; sequence MMSKLGVLLTICLLLFPLTA. Residues 21-50 constitute a propeptide that is removed on maturation; the sequence is VQLDGDQPADLPALRTQDISTDHSPWFDPV. 3 disulfide bridges follow: Cys53–Cys65, Cys54–Cys61, and Cys58–Cys64. A 4-hydroxyproline modification is found at Pro63.

This sequence belongs to the conotoxin M superfamily. Expressed by the venom duct.

It is found in the secreted. The polypeptide is Conotoxin TsMMSK-011 (Conus tessulatus (Tessellate cone)).